Consider the following 303-residue polypeptide: Ribosomal protein L11 methyltransferase (303 aa).

Positions 152, 173, 195, and 239 each coordinate S-adenosyl-L-methionine.

This sequence belongs to the methyltransferase superfamily. PrmA family.

It localises to the cytoplasm. It catalyses the reaction L-lysyl-[protein] + 3 S-adenosyl-L-methionine = N(6),N(6),N(6)-trimethyl-L-lysyl-[protein] + 3 S-adenosyl-L-homocysteine + 3 H(+). Functionally, methylates ribosomal protein L11. The polypeptide is Ribosomal protein L11 methyltransferase (Desulforapulum autotrophicum (strain ATCC 43914 / DSM 3382 / VKM B-1955 / HRM2) (Desulfobacterium autotrophicum)).